The following is a 268-amino-acid chain: MSGLSIENISMRFDLPNGSSVQALKNVSLHLKEGELMSVLGPSGCGKTTLLNIVAGFLAPTEGHIAMNGHKVHGPNAERGMVFQQGALFEWMNVRDNVSFGPRMKGQRASQYGSHVDHLLDVTGLGDFKDKAIYELSGGMQQRVALARCLANDPDVILMDEPLGALDALTREKMQGLVLKLWKETGKTIILITHSVEEALLLGERLLVMAPRPGRIHKEYRLPYADMGVNADLREVKKSEGYSQTREEILSMIWDMEEEIMGRTEAAQ.

An ABC transporter domain is found at 4–236; it reads LSIENISMRF…MGVNADLREV (233 aa). 41 to 48 contributes to the ATP binding site; it reads GPSGCGKT.

This sequence belongs to the ABC transporter superfamily. Taurine importer (TC 3.A.1.17.1) family. The complex is composed of two ATP-binding proteins (TauB), two transmembrane proteins (TauC) and a solute-binding protein (TauA).

It is found in the cell inner membrane. The enzyme catalyses taurine(out) + ATP + H2O = taurine(in) + ADP + phosphate + H(+). Functionally, part of the ABC transporter complex TauABC involved in taurine import. Responsible for energy coupling to the transport system. In Ruegeria pomeroyi (strain ATCC 700808 / DSM 15171 / DSS-3) (Silicibacter pomeroyi), this protein is Taurine import ATP-binding protein TauB.